A 412-amino-acid polypeptide reads, in one-letter code: Multifunctional CCA protein (412 aa).

The ATP site is built by Gly-8 and Arg-11. Gly-8 and Arg-11 together coordinate CTP. Residues Asp-21 and Asp-23 each contribute to the Mg(2+) site. Residues Arg-91, Arg-137, and Arg-140 each contribute to the ATP site. CTP-binding residues include Arg-91, Arg-137, and Arg-140. An HD domain is found at 228–329; that stretch reads TGIHTLMTLS…VKLFDSIDAW (102 aa).

It belongs to the tRNA nucleotidyltransferase/poly(A) polymerase family. Bacterial CCA-adding enzyme type 1 subfamily. As to quaternary structure, monomer. Can also form homodimers and oligomers. Mg(2+) serves as cofactor. Requires Ni(2+) as cofactor.

It catalyses the reaction a tRNA precursor + 2 CTP + ATP = a tRNA with a 3' CCA end + 3 diphosphate. It carries out the reaction a tRNA with a 3' CCA end + 2 CTP + ATP = a tRNA with a 3' CCACCA end + 3 diphosphate. Its function is as follows. Catalyzes the addition and repair of the essential 3'-terminal CCA sequence in tRNAs without using a nucleic acid template. Adds these three nucleotides in the order of C, C, and A to the tRNA nucleotide-73, using CTP and ATP as substrates and producing inorganic pyrophosphate. tRNA 3'-terminal CCA addition is required both for tRNA processing and repair. Also involved in tRNA surveillance by mediating tandem CCA addition to generate a CCACCA at the 3' terminus of unstable tRNAs. While stable tRNAs receive only 3'-terminal CCA, unstable tRNAs are marked with CCACCA and rapidly degraded. The protein is Multifunctional CCA protein of Shigella flexneri.